Here is a 1446-residue protein sequence, read N- to C-terminus: ABC transporter G family member 53 (1446 aa).

In terms of domain architecture, ABC transporter 1 spans 153–426; it reads ANTLHITPNR…FESVGFKCPE (274 aa). 186–193 contributes to the ATP binding site; that stretch reads GPPGAGKT. The ABC transmembrane type-2 1 domain maps to 504-717; sequence ELLKANIDRE…AQNAISVNEF (214 aa). Helical transmembrane passes span 523–543, 555–575, 610–630, 641–661, 666–686, and 752–772; these read VYIFKATQLTLMTFIAMTVFI, GGIYMGALFFGILMIMFNGLA, TPLSLLNVTIWVFITYYVIGF, FLLLLVMNETSSGLFRFIAGF, VVASTMGSFCILIFMLLGGFI, and IGVGALLGYVLLFNILYTICL. The 253-residue stretch at 849-1101 folds into the ABC transporter 2 domain; that stretch reads ITFEDIRYSV…ELIRYFESIE (253 aa). Position 894 to 901 (894 to 901) interacts with ATP; the sequence is GVSGAGKT. The ABC transmembrane type-2 2 domain maps to 1174–1388; the sequence is TQCLACLWKQ…TLYGLVTSQF (215 aa). 7 helical membrane passes run 1195–1215, 1225–1242, 1281–1301, 1308–1328, 1338–1358, 1363–1383, and 1415–1435; these read AVKYFYTIVIALLFGTMFWGV, LFNAMGSMYASVLFMGVQ, LPYILVQSLIYGVLVYAMIGF, FFWYLFFMYFTLSYYTFYGMM, VASVVSTAFYAIWNLFSGFII, IPIWWRWYYWVCPVAWTLYGL, and FLWVVAVMVVSFAVLFAFLFG.

This sequence belongs to the ABC transporter superfamily. ABCG family. PDR (TC 3.A.1.205) subfamily.

The protein localises to the membrane. May be a general defense protein. The sequence is that of ABC transporter G family member 53 from Oryza sativa subsp. japonica (Rice).